Here is a 226-residue protein sequence, read N- to C-terminus: ATP synthase F(0) complex subunit a (226 aa).

Transmembrane regions (helical) follow at residues 12–32 (PTVLGLPAAILVILFPPLLVP), 68–88 (WSLMLTSLIIFIASTNLLGLF), 97–117 (QLSMNLAMAIPLWASTVAMGL), 138–158 (IPMLIIIETISLFIQPLALAV), 164–184 (ITAGHLLMHLIGSATLTMLTI), and 189–209 (TLITLTILTLLTILEIAVALI).

It belongs to the ATPase A chain family. Component of the ATP synthase complex composed at least of ATP5F1A/subunit alpha, ATP5F1B/subunit beta, ATP5MC1/subunit c (homooctomer), MT-ATP6/subunit a, MT-ATP8/subunit 8, ATP5ME/subunit e, ATP5MF/subunit f, ATP5MG/subunit g, ATP5MK/subunit k, ATP5MJ/subunit j, ATP5F1C/subunit gamma, ATP5F1D/subunit delta, ATP5F1E/subunit epsilon, ATP5PF/subunit F6, ATP5PB/subunit b, ATP5PD/subunit d, ATP5PO/subunit OSCP. ATP synthase complex consists of a soluble F(1) head domain (subunits alpha(3) and beta(3)) - the catalytic core - and a membrane F(0) domain - the membrane proton channel (subunits c, a, 8, e, f, g, k and j). These two domains are linked by a central stalk (subunits gamma, delta, and epsilon) rotating inside the F1 region and a stationary peripheral stalk (subunits F6, b, d, and OSCP). Interacts with DNAJC30; interaction is direct.

The protein resides in the mitochondrion inner membrane. The enzyme catalyses H(+)(in) = H(+)(out). In terms of biological role, subunit a, of the mitochondrial membrane ATP synthase complex (F(1)F(0) ATP synthase or Complex V) that produces ATP from ADP in the presence of a proton gradient across the membrane which is generated by electron transport complexes of the respiratory chain. ATP synthase complex consist of a soluble F(1) head domain - the catalytic core - and a membrane F(1) domain - the membrane proton channel. These two domains are linked by a central stalk rotating inside the F(1) region and a stationary peripheral stalk. During catalysis, ATP synthesis in the catalytic domain of F(1) is coupled via a rotary mechanism of the central stalk subunits to proton translocation. With the subunit c (ATP5MC1), forms the proton-conducting channel in the F(0) domain, that contains two crucial half-channels (inlet and outlet) that facilitate proton movement from the mitochondrial intermembrane space (IMS) into the matrix. Protons are taken up via the inlet half-channel and released through the outlet half-channel, following a Grotthuss mechanism. The polypeptide is ATP synthase F(0) complex subunit a (Pongo pygmaeus (Bornean orangutan)).